Reading from the N-terminus, the 344-residue chain is GTP 3',8-cyclase (344 aa).

Residues 19-244 enclose the Radical SAM core domain; sequence PFARPITYLR…TPLAERTGGP (226 aa). Arg28 is a binding site for GTP. Residues Cys35 and Cys39 each coordinate [4Fe-4S] cluster. Tyr41 serves as a coordination point for S-adenosyl-L-methionine. Cys42 serves as a coordination point for [4Fe-4S] cluster. Arg77 serves as a coordination point for GTP. Gly81 lines the S-adenosyl-L-methionine pocket. GTP is bound at residue Thr110. Ser134 is an S-adenosyl-L-methionine binding site. Lys170 is a binding site for GTP. An S-adenosyl-L-methionine-binding site is contributed by Met204. [4Fe-4S] cluster contacts are provided by Cys268 and Cys271. 273–275 is a GTP binding site; that stretch reads RVR. Cys285 serves as a coordination point for [4Fe-4S] cluster.

The protein belongs to the radical SAM superfamily. MoaA family. Monomer and homodimer. [4Fe-4S] cluster is required as a cofactor.

The catalysed reaction is GTP + AH2 + S-adenosyl-L-methionine = (8S)-3',8-cyclo-7,8-dihydroguanosine 5'-triphosphate + 5'-deoxyadenosine + L-methionine + A + H(+). It functions in the pathway cofactor biosynthesis; molybdopterin biosynthesis. Catalyzes the cyclization of GTP to (8S)-3',8-cyclo-7,8-dihydroguanosine 5'-triphosphate. The polypeptide is GTP 3',8-cyclase (Paracoccus denitrificans (strain Pd 1222)).